A 220-amino-acid chain; its full sequence is Transmembrane emp24 domain-containing protein 1 (220 aa).

Positions 1-19 (MAWSSSFLFIVLPLAAAVA) are cleaved as a signal peptide. The Extracellular portion of the chain corresponds to 20–187 (VQPQDTELTF…LQDSNLERVN (168 aa)). The GOLD domain occupies 36-118 (QECFYQTTLY…EKLVFFELIF (83 aa)). Residues 138–164 (ELLDIKLEDIKESIESVKSRLERSIQM) are a coiled coil. A helical transmembrane segment spans residues 188–208 (FWSAINVGVLVTVAFLQVYML). Over 209–220 (KSLFDDKRKIRT) the chain is Cytoplasmic. A COPII vesicle coat-binding motif is present at residues 211–212 (LF). A COPI vesicle coat-binding motif is present at residues 211–220 (LFDDKRKIRT).

It belongs to the EMP24/GP25L family. In terms of assembly, homodimer in endoplasmic reticulum, endoplasmic reticulum-Golgi intermediate compartment and cis-Golgi network. Interacts with IL1RL1. Interacts with RNF26; this interaction is important to modulate innate immune signaling through the cGAS-STING pathway.

Its subcellular location is the cell membrane. It is found in the endoplasmic reticulum membrane. It localises to the golgi apparatus. The protein localises to the cis-Golgi network membrane. The protein resides in the endoplasmic reticulum-Golgi intermediate compartment membrane. Functionally, potential role in vesicular protein trafficking, mainly in the early secretory pathway. May act as a cargo receptor at the lumenal side for incorporation of secretory cargo molecules into transport vesicles and may be involved in vesicle coat formation at the cytoplasmic side. Plays a positive role in IL-33-mediated IL-8 and IL-6 production by interacting with interleukin-33 receptor IL1RL1. Plays also a role in the modulation of innate immune signaling through the cGAS-STING pathway by interacting with RNF26. The sequence is that of Transmembrane emp24 domain-containing protein 1 (tmed1) from Xenopus tropicalis (Western clawed frog).